Consider the following 671-residue polypeptide: MGQVHLHNRSFNKATSAGFLIALGIVYGDIGTSPLYAMQAIVRGQGGLANLSESFILGAVSLVIWTLTLITTVKYVLIALKADNHHEGGIFSLFTLVRRMRKWLIVPAMIGGATLLADGALTPAVTVTSAIEGLRGVTHVYSNQTTVMVTTLIILAFLFLIQRFGASLVGRLFGPIMFIWFGFLGVSGLINSFLDLSILKAINPYYAIHLLFSPENKAGFFILGSIFLVTTGAEALYSDLGHVGRGNIYVSWPFVKICIILSYCGQGAWLLAHRGEHIEKLNPFFAVLPDNMVIYVVILSTLAAIIASQALISGSFTLVSEAIRLKLLPLFKIYYPGQTLGQLYIPAVNFALWVTTSFFVLYFKTSEHMEAAYSLAITITMLMTTTLLTYFLIQKGMPKIAIAFISIGLFCIEGSFFAASLVQFINGAYIVVLIALAIIFVMFIWNKSHKIVMKYIKSLNINEYKNQLNALRHDESYDLYQTNVVYLTSKMDHEWIDRSILYSILDKRPKRAECYWFVNVKVTDEPYTSEYKVDMMDTDFIVRVNLYLGFRMRQEVPRYLRTIVTDLMESGRLPRQHQHYSITPGRKVGDFRFVVVEEKLMNARQMPGFERFVLQTKAQIKRITASPIRWFGLQFSEVTVETVPLVLSDVRNLEIHERLEQVDETEAPATN.

Helical transmembrane passes span 18–38 (GFLI…LYAM), 60–80 (VSLV…LIAL), 103–123 (WLIV…ALTP), 149–169 (VTTL…ASLV), 173–193 (FGPI…INSF), 218–238 (AGFF…ALYS), 252–272 (WPFV…WLLA), 292–312 (MVIY…QALI), 343–363 (LYIP…VLYF), 373–393 (YSLA…YFLI), 402–422 (IAFI…ASLV), and 424–444 (FING…VMFI).

The protein belongs to the HAK/KUP transporter (TC 2.A.72) family.

It is found in the cell membrane. It catalyses the reaction K(+)(in) + H(+)(in) = K(+)(out) + H(+)(out). Functionally, transport of potassium into the cell. Likely operates as a K(+):H(+) symporter. This chain is Probable potassium transport system protein Kup 2, found in Lactococcus lactis subsp. cremoris (strain SK11).